Consider the following 594-residue polypeptide: Neopentalenolactone D synthase (594 aa).

FAD contacts are provided by residues 64 to 65 (IG), 86 to 87 (DK), 94 to 95 (TW), 106 to 107 (DV), tyrosine 112, valine 156, and methionine 494.

This sequence belongs to the FAD-binding monooxygenase family. Requires FAD as cofactor.

The catalysed reaction is 1-deoxy-11-oxopentalenate + NADPH + O2 + H(+) = neopentalenolactone D + NADP(+) + H2O. Its pathway is antibiotic biosynthesis; neopentalenolactone biosynthesis. Its function is as follows. Catalyzes the flavin-dependent Baeyer-Villiger oxidation of 1-deoxy-11-oxopentalenic acid to neopentalenolactone D in the biosynthesis of neopentalenolactone antibiotic. The sequence is that of Neopentalenolactone D synthase (ptlE) from Streptomyces avermitilis (strain ATCC 31267 / DSM 46492 / JCM 5070 / NBRC 14893 / NCIMB 12804 / NRRL 8165 / MA-4680).